The chain runs to 123 residues: Small ribosomal subunit protein uS12 (123 aa).

3-methylthioaspartic acid is present on Asp89.

This sequence belongs to the universal ribosomal protein uS12 family. Part of the 30S ribosomal subunit. Contacts proteins S8 and S17. May interact with IF1 in the 30S initiation complex.

Functionally, with S4 and S5 plays an important role in translational accuracy. Its function is as follows. Interacts with and stabilizes bases of the 16S rRNA that are involved in tRNA selection in the A site and with the mRNA backbone. Located at the interface of the 30S and 50S subunits, it traverses the body of the 30S subunit contacting proteins on the other side and probably holding the rRNA structure together. The combined cluster of proteins S8, S12 and S17 appears to hold together the shoulder and platform of the 30S subunit. The polypeptide is Small ribosomal subunit protein uS12 (Desulfovibrio desulfuricans (strain ATCC 27774 / DSM 6949 / MB)).